Consider the following 222-residue polypeptide: uncharacterized protein (222 aa).

One can recognise an HTH gntR-type domain in the interval 8–77 (AKKGQIIYRY…GNAGYFVAKN (70 aa)).

This is an uncharacterized protein from Mycoplasma pneumoniae (strain ATCC 29342 / M129 / Subtype 1) (Mycoplasmoides pneumoniae).